The sequence spans 79 residues: Centromere protein X (79 aa).

Position 1 is an N-acetylmethionine (Met1).

The protein belongs to the CENP-X/MHF2 family. In terms of assembly, heterodimer with CENPX, sometimes called MHF; this interaction stabilizes both partners. MHF heterodimers can assemble to form tetrameric structures. MHF also coassemble with CENPT-CENPW heterodimers at centromeres to form the tetrameric CENP-T-W-S-X complex. Forms a discrete complex with FANCM and CENPX, called FANCM-MHF; this interaction, probably mediated by direct binding between CENPS and FANCM, leads to synergistic activation of double-stranded DNA binding and strongly stimulates FANCM-mediated DNA remodeling. Recruited by FANCM to the Fanconi anemia (FA) core complex, which consists of CENPS, CENPX, FANCA, FANCB, FANCC, FANCE, FANCF, FANCG, FANCL, FANCM, FAAP24 and FAAP100. The FA core complex associates with Bloom syndrome (BLM) complex, which consists of at least BLM, DNA topoisomerase 3-alpha (TOP3A), RMI1/BLAP75, RPA1/RPA70 and RPA2/RPA32. The super complex between FA and BLM is called BRAFT.

It localises to the nucleus. It is found in the chromosome. The protein localises to the centromere. The protein resides in the kinetochore. In terms of biological role, DNA-binding component of the Fanconi anemia (FA) core complex. Required for the normal activation of the FA pathway, leading to monoubiquitination of the FANCI-FANCD2 complex in response to DNA damage, cellular resistance to DNA cross-linking drugs, and prevention of chromosomal breakage. In complex with CENPS (MHF heterodimer), crucial cofactor for FANCM in both binding and ATP-dependent remodeling of DNA. Stabilizes FANCM. In complex with CENPS and FANCM (but not other FANC proteins), rapidly recruited to blocked forks and promotes gene conversion at blocked replication forks. In complex with CENPS, CENPT and CENPW (CENP-T-W-S-X heterotetramer), involved in the formation of a functional kinetochore outer plate, which is essential for kinetochore-microtubule attachment and faithful mitotic progression. As a component of MHF and CENP-T-W-S-X complexes, binds DNA and bends it to form a nucleosome-like structure. DNA-binding function is fulfilled in the presence of CENPS, with the following preference for DNA substates: Holliday junction &gt; double-stranded &gt; splay arm &gt; single-stranded. Does not bind DNA on its own. This chain is Centromere protein X (CENPX), found in Bos taurus (Bovine).